Reading from the N-terminus, the 122-residue chain is Large ribosomal subunit protein uL14 (122 aa).

Belongs to the universal ribosomal protein uL14 family. In terms of assembly, part of the 50S ribosomal subunit. Forms a cluster with proteins L3 and L19. In the 70S ribosome, L14 and L19 interact and together make contacts with the 16S rRNA in bridges B5 and B8.

Binds to 23S rRNA. Forms part of two intersubunit bridges in the 70S ribosome. In Caulobacter sp. (strain K31), this protein is Large ribosomal subunit protein uL14.